The sequence spans 283 residues: Phosphate import ATP-binding protein PstB 2 (283 aa).

The region spanning 36-278 (LQVKQFNFYY…PKKKQTEDYI (243 aa)) is the ABC transporter domain. Residue 69 to 76 (GPSGCGKS) participates in ATP binding.

It belongs to the ABC transporter superfamily. Phosphate importer (TC 3.A.1.7) family. As to quaternary structure, the complex is composed of two ATP-binding proteins (PstB), two transmembrane proteins (PstC and PstA) and a solute-binding protein (PstS).

The protein resides in the cell inner membrane. The catalysed reaction is phosphate(out) + ATP + H2O = ADP + 2 phosphate(in) + H(+). In terms of biological role, part of the ABC transporter complex PstSACB involved in phosphate import. Responsible for energy coupling to the transport system. This is Phosphate import ATP-binding protein PstB 2 from Nitrosococcus oceani (strain ATCC 19707 / BCRC 17464 / JCM 30415 / NCIMB 11848 / C-107).